The sequence spans 288 residues: ATP synthase gamma chain 1 (288 aa).

Belongs to the ATPase gamma chain family. In terms of assembly, F-type ATPases have 2 components, CF(1) - the catalytic core - and CF(0) - the membrane proton channel. CF(1) has five subunits: alpha(3), beta(3), gamma(1), delta(1), epsilon(1). CF(0) has three main subunits: a, b and c.

The protein localises to the cell inner membrane. Its function is as follows. Produces ATP from ADP in the presence of a proton gradient across the membrane. The gamma chain is believed to be important in regulating ATPase activity and the flow of protons through the CF(0) complex. The sequence is that of ATP synthase gamma chain 1 from Photobacterium profundum (strain SS9).